We begin with the raw amino-acid sequence, 1033 residues long: Putative U-box domain-containing protein 42 (1033 aa).

The interval 145-226 (SQSQMTDIPD…SSNASSQRKY (82 aa)) is disordered. Residues 200-226 (LSKSQSQSTEIPDIPSQSSNASSQRKY) are compositionally biased toward polar residues. Residues 245–322 (PPYQAFICPL…QEWKVRNEAA (78 aa)) enclose the U-box domain. 5 ARM repeats span residues 483-522 (PENI…EIDI), 523-562 (GHEK…HISL), 564-608 (HPNN…NILE), 610-659 (GLEH…SLSK), and 665-704 (ATIV…ALTP).

The enzyme catalyses S-ubiquitinyl-[E2 ubiquitin-conjugating enzyme]-L-cysteine + [acceptor protein]-L-lysine = [E2 ubiquitin-conjugating enzyme]-L-cysteine + N(6)-ubiquitinyl-[acceptor protein]-L-lysine.. Its pathway is protein modification; protein ubiquitination. Its function is as follows. Functions as an E3 ubiquitin ligase. The protein is Putative U-box domain-containing protein 42 (PUB42) of Arabidopsis thaliana (Mouse-ear cress).